Consider the following 352-residue polypeptide: [LysW]-L-2-aminoadipate/[LysW]-L-glutamate phosphate reductase (352 aa).

Ser13–Thr16 is an NADP(+) binding site. The active site involves Cys153. Asn319 provides a ligand contact to NADP(+).

It belongs to the NAGSA dehydrogenase family. Type 1 subfamily. LysY sub-subfamily.

Its subcellular location is the cytoplasm. It catalyses the reaction [amino-group carrier protein]-C-terminal-N-(1-carboxy-5-oxopentan-1-yl)-L-glutamine + phosphate + NADP(+) = [amino-group carrier protein]-C-terminal-N-(1-carboxy-5-phosphooxy-5-oxopentan-1-yl)-L-glutamine + NADPH + H(+). It carries out the reaction [amino-group carrier protein]-C-terminal-gamma-(L-glutamyl-5-semialdehyde)-L-glutamate + phosphate + NADP(+) = [amino-group carrier protein]-C-terminal-gamma-(5-phospho-L-glutamyl)-L-glutamate + NADPH + H(+). The protein operates within amino-acid biosynthesis; L-lysine biosynthesis via AAA pathway; L-lysine from L-alpha-aminoadipate (Thermus route): step 3/5. Its pathway is amino-acid biosynthesis; L-arginine biosynthesis. Functionally, involved in both the arginine and lysine biosynthetic pathways. The chain is [LysW]-L-2-aminoadipate/[LysW]-L-glutamate phosphate reductase from Saccharolobus solfataricus (strain ATCC 35092 / DSM 1617 / JCM 11322 / P2) (Sulfolobus solfataricus).